A 433-amino-acid chain; its full sequence is Vesicle-associated protein (433 aa).

Repeat copies occupy residues 112 to 122 and 219 to 229. The tract at residues 112–350 is 3 X 11 AA repeats of G-G-G-I-G-G-G-L-G-G-G; sequence GGGIGGGLGG…GGIGGGLGGG (239 aa). Positions 266-274 match the Nuclear localization signal motif; that stretch reads VDGKKKGKG. The stretch at 340–350 is repeat 3; sequence GGGIGGGLGGG. 2 disordered regions span residues 366-389 and 411-433; these read RVGGDISGPDLDVSGPDLDIDGDG and HGKGDIDVDADVDIERPDLNVSG. Positions 423–433 are enriched in basic and acidic residues; sequence DIERPDLNVSG.

In terms of tissue distribution, egg cortex.

It is found in the microsome membrane. The protein localises to the nucleus. The protein resides in the endoplasmic reticulum membrane. Its function is as follows. May function as a multidomain RNA-binding protein. May play a role in nuclear RNA processing and in early development. The polypeptide is Vesicle-associated protein (VAP-1) (Strongylocentrotus purpuratus (Purple sea urchin)).